The sequence spans 723 residues: Aminodeoxychorismate synthase (723 aa).

In terms of domain architecture, Glutamine amidotransferase type-1 spans 2–195 (RTLLVDNYDS…RDLTERHGRT (194 aa)). Cys-82 (nucleophile) is an active-site residue. The tract at residues 96–117 (VGRAPEPRHGRTSAVRHDGTGL) is disordered. The segment covering 98–114 (RAPEPRHGRTSAVRHDG) has biased composition (basic and acidic residues). Catalysis depends on residues His-169 and Glu-171. 2 disordered regions span residues 192–219 (HGRTRHGGRAGHGTLPPPAPARETKATT) and 693–723 (FPGRERPGKDLDGEPDDGTDAGAPKDLVLPG). Residues 255-723 (LDSSRPGGEL…GAPKDLVLPG (469 aa)) form a PABB component region. Basic and acidic residues predominate over residues 695–704 (GRERPGKDLD).

This sequence in the C-terminal section; belongs to the anthranilate synthase component I family.

It carries out the reaction chorismate + L-glutamine = 4-amino-4-deoxychorismate + L-glutamate. It functions in the pathway antibiotic biosynthesis; candicidin biosynthesis. In terms of biological role, involved in candicidin biosynthesis. Catalyzes the biosynthesis of 4-amino-4-deoxychorismate (ADC) from chorismate and glutamine. This Streptomyces griseus protein is Aminodeoxychorismate synthase.